We begin with the raw amino-acid sequence, 745 residues long: MTSNFSSTVAGLPRIGAKRELKFALEGYWNGSIEGRELAQTARQLVNTASDSLSGLDSVPFAGRSYYDAMLDTAAILGVLPERFDDIADHENDGLPLWIDRYFGAARGTETLPAQAMTKWFDTNYHYLVPELSADTRFVLDASALIEDLRCQQVRGVNARPVLVGPLTFLSLARTTDGSNPLDHLPALFEVYERLIKSFDTEWVQIDEPALVTDVAPEVLEQVRAGYTTLAKRGGVFVNTYFGSGDQALNTLAGIGLGAIGVDLVTHGVTELAAWKGEELLVAGIVDGRNIWRTDLCAALASLKRLAARGPIAVSTSCSLLHVPYTLEAENIEPEVRDWLAFGSEKITEVKLLADALAGNIDAAAFDAASAAIASRRTSPRTAPITQELPGRSRGSFNTRVTLQEKSLELPALPTTTIGSFPQTPSIRSARARLRKESITLEQYEEAMREEIDLVIAKQEELGLDVLVHGEPERNDMVQYFSELLDGFLSTANGWVQSYGSRCVRPPVLFGNVSRPAPMTVKWFQYAQSLTQKHVKGMLTGPVTILAWSFVRDDQPLATTADQVALALRDEINDLIEAGAKIIQVDEPAIRELLPLRDVDKPAYLQWSVDSFRLATAGAPDDVQIHTHMCYSEFNEVISSVIALDADVTTIEAARSDMQVLAALKSSGFELGVGPGVWDIHSPRVPSAQEVDGLLEAALQSVDPRQLWVNPDCGLKTRGWPEVEASLKVLVESAKQAREKIGATI.

5-methyltetrahydropteroyltri-L-glutamate is bound by residues 19-22 (RELK) and Lys119. Residues 418–420 (IGS) and Glu471 each bind L-homocysteine. L-methionine contacts are provided by residues 418–420 (IGS) and Glu471. Residues 502–503 (RC) and Trp548 contribute to the 5-methyltetrahydropteroyltri-L-glutamate site. Asp586 serves as a coordination point for L-homocysteine. Position 586 (Asp586) interacts with L-methionine. Glu592 is a 5-methyltetrahydropteroyltri-L-glutamate binding site. Zn(2+) contacts are provided by His628, Cys630, and Glu652. The Proton donor role is filled by His681. Cys713 provides a ligand contact to Zn(2+).

It belongs to the vitamin-B12 independent methionine synthase family. The cofactor is Zn(2+).

It carries out the reaction 5-methyltetrahydropteroyltri-L-glutamate + L-homocysteine = tetrahydropteroyltri-L-glutamate + L-methionine. The protein operates within amino-acid biosynthesis; L-methionine biosynthesis via de novo pathway; L-methionine from L-homocysteine (MetE route): step 1/1. Its function is as follows. Catalyzes the transfer of a methyl group from 5-methyltetrahydrofolate to homocysteine resulting in methionine formation. The chain is 5-methyltetrahydropteroyltriglutamate--homocysteine methyltransferase from Corynebacterium glutamicum (strain R).